The chain runs to 309 residues: 2-dehydropantoate 2-reductase (309 aa).

NADP(+) is bound by residues 7 to 12, Arg-31, and Lys-74; that span reads GAGSIG. Residues 8–10, Arg-31, Lys-74, and Cys-84 each bind CoA; that span reads AGS. 2 residues coordinate NADP(+): Asn-100 and Ala-124. Lys-180 serves as the catalytic Proton donor. Residues Lys-180, Asn-184, Asn-188, Asn-198, and 247–250 contribute to the substrate site; that span reads NYNS. CoA is bound at residue Arg-257. Glu-262 is an NADP(+) binding site.

This sequence belongs to the ketopantoate reductase family. As to quaternary structure, homodimer.

The protein localises to the cytoplasm. The catalysed reaction is (R)-pantoate + NAD(+) = 2-dehydropantoate + NADH + H(+). It catalyses the reaction (R)-pantoate + NADP(+) = 2-dehydropantoate + NADPH + H(+). It participates in cofactor biosynthesis; coenzyme A biosynthesis. With respect to regulation, regulated by feedback inhibition by coenzyme A (CoA). CoA acts by competing with NAD(P)H. A disulfide bond is formed between CoA and Cys-84, which indicates an irreversible inhibition upon binding of CoA. In terms of biological role, catalyzes the NAD(P)H-dependent reduction of ketopantoate into pantoic acid. Prefers NADH rather than NADPH as the electron donor. The chain is 2-dehydropantoate 2-reductase from Thermococcus kodakarensis (strain ATCC BAA-918 / JCM 12380 / KOD1) (Pyrococcus kodakaraensis (strain KOD1)).